The following is a 287-amino-acid chain: ATP synthase gamma chain (287 aa).

Belongs to the ATPase gamma chain family. As to quaternary structure, F-type ATPases have 2 components, CF(1) - the catalytic core - and CF(0) - the membrane proton channel. CF(1) has five subunits: alpha(3), beta(3), gamma(1), delta(1), epsilon(1). CF(0) has three main subunits: a, b and c.

Its subcellular location is the cell inner membrane. Its function is as follows. Produces ATP from ADP in the presence of a proton gradient across the membrane. The gamma chain is believed to be important in regulating ATPase activity and the flow of protons through the CF(0) complex. The polypeptide is ATP synthase gamma chain (Serratia proteamaculans (strain 568)).